The sequence spans 157 residues: Ubiquitin-like protein 4A (157 aa).

In terms of domain architecture, Ubiquitin-like spans 1–76 (MQLTVKALQG…LNLVVKPLEK (76 aa)). Lysine 48 is covalently cross-linked (Glycyl lysine isopeptide (Lys-Gly) (interchain with G-Cter in ubiquitin)). Serine 90 carries the phosphoserine modification. A required and sufficient for interaction with BAG6 region spans residues 96 to 138 (WHLISKVLARHFSAADASRVLEQLQRDYERSLSRLTLDDIERL).

In terms of assembly, component of the BAG6/BAT3 complex, at least composed of BAG6, UBL4A and GET4/TRC35. Interacts with BAG6; the interaction is direct and required for UBL4A protein stability. Interacts with USP13; may be indirect via BAG6. Post-translationally, polyubiquitinated. Ubiquitination by AMFR and deubiquitination by USP13 may regulate the interaction between the BAG6/BAT3 complex and SGTA and therefore may regulate client proteins fate.

The protein resides in the cytoplasm. It localises to the cytosol. It is found in the nucleus. Functionally, as part of a cytosolic protein quality control complex, the BAG6/BAT3 complex, maintains misfolded and hydrophobic patches-containing proteins in a soluble state and participates in their proper delivery to the endoplasmic reticulum or alternatively can promote their sorting to the proteasome where they undergo degradation. The BAG6/BAT3 complex is involved in the post-translational delivery of tail-anchored/type II transmembrane proteins to the endoplasmic reticulum membrane. Recruited to ribosomes, it interacts with the transmembrane region of newly synthesized tail-anchored proteins and together with SGTA and ASNA1 mediates their delivery to the endoplasmic reticulum. Client proteins that cannot be properly delivered to the endoplasmic reticulum are ubiquitinated and sorted to the proteasome. Similarly, the BAG6/BAT3 complex also functions as a sorting platform for proteins of the secretory pathway that are mislocalized to the cytosol either delivering them to the proteasome for degradation or to the endoplasmic reticulum. The BAG6/BAT3 complex also plays a role in the endoplasmic reticulum-associated degradation (ERAD), a quality control mechanism that eliminates unwanted proteins of the endoplasmic reticulum through their retrotranslocation to the cytosol and their targeting to the proteasome. It maintains these retrotranslocated proteins in an unfolded yet soluble state condition in the cytosol to ensure their proper delivery to the proteasome. The protein is Ubiquitin-like protein 4A (UBL4A) of Oryctolagus cuniculus (Rabbit).